A 407-amino-acid polypeptide reads, in one-letter code: MAANDAELHDSFSGKSQPGENRKASRSSKHCSRSRSRSTERKRKSGDKRHKRSHSRSKEARKKDSEKALKCQSGSEERLEFSDKGRDRLSEDTEERHRRKDKKTSRPRSHSRSRSKEKRHHNRNWDKRRSRSRSRSRDKKRRARSRSNSRSKHRHRSRSRSKSREKKKRIEKSRKKSRSPSISPVTFRGRNTAMDAQEALARRLERAKKLQEQKEKDMLEKWQHQEKAAASTPQCDPAAAAPSPALNVAALLASGTQVTPQIAMAAQMAALQAKTLAETGIAVPSYYNPSAVNPMKFAEQEKKRKMLWQGKKEGDNKSQTAELWEKLNFGNKDQNVKFRKLMGIKGEEEAASSAAVNEDGLKTLQQQEEMFRNLDVQYEMARSQTHTQRGMGLGFSSSFSSRGMDAV.

Residues 1–12 show a composition bias toward basic and acidic residues; the sequence is MAANDAELHDSF. Residues 1 to 239 are disordered; that stretch reads MAANDAELHD…ASTPQCDPAA (239 aa). Over residues 24-55 the composition is skewed to basic residues; the sequence is ASRSSKHCSRSRSRSTERKRKSGDKRHKRSHS. The segment covering 56-96 has biased composition (basic and acidic residues); the sequence is RSKEARKKDSEKALKCQSGSEERLEFSDKGRDRLSEDTEER. A compositionally biased stretch (basic residues) spans 97-178; it reads HRRKDKKTSR…RIEKSRKKSR (82 aa). Residues 191–221 are a coiled coil; the sequence is NTAMDAQEALARRLERAKKLQEQKEKDMLEK. Basic and acidic residues predominate over residues 200–227; it reads LARRLERAKKLQEQKEKDMLEKWQHQEK.

The protein belongs to the RSRC2 family.

This chain is Arginine/serine-rich coiled-coil protein 2 (rsrc2), found in Danio rerio (Zebrafish).